Reading from the N-terminus, the 297-residue chain is Urease accessory protein UreD (297 aa).

This sequence belongs to the UreD family. As to quaternary structure, ureD, UreF and UreG form a complex that acts as a GTP-hydrolysis-dependent molecular chaperone, activating the urease apoprotein by helping to assemble the nickel containing metallocenter of UreC. The UreE protein probably delivers the nickel.

It localises to the cytoplasm. Its function is as follows. Required for maturation of urease via the functional incorporation of the urease nickel metallocenter. This is Urease accessory protein UreD from Prochlorococcus marinus subsp. pastoris (strain CCMP1986 / NIES-2087 / MED4).